The primary structure comprises 366 residues: Bacteriochlorophyll a protein (366 aa).

Positions 111, 146, 290, 297, and 298 each coordinate bacteriochlorophyll a.

In terms of assembly, homotrimer. Each subunit contains 7 molecules of bacteriochlorophyll a.

Intermediary in the transfer of excitation energy from the chlorophyll to the reaction centers. This is Bacteriochlorophyll a protein (fmoA) from Chlorobaculum tepidum (strain ATCC 49652 / DSM 12025 / NBRC 103806 / TLS) (Chlorobium tepidum).